Reading from the N-terminus, the 282-residue chain is Acetylglutamate kinase (282 aa).

Substrate contacts are provided by residues 62 to 63 (GG), arginine 84, and asparagine 178.

Belongs to the acetylglutamate kinase family. ArgB subfamily.

The protein resides in the cytoplasm. The catalysed reaction is N-acetyl-L-glutamate + ATP = N-acetyl-L-glutamyl 5-phosphate + ADP. Its pathway is amino-acid biosynthesis; L-arginine biosynthesis; N(2)-acetyl-L-ornithine from L-glutamate: step 2/4. Catalyzes the ATP-dependent phosphorylation of N-acetyl-L-glutamate. The sequence is that of Acetylglutamate kinase from Thermotoga neapolitana (strain ATCC 49049 / DSM 4359 / NBRC 107923 / NS-E).